Consider the following 61-residue polypeptide: Probable spanin, outer lipoprotein subunit (61 aa).

The signal sequence occupies residues 1–28; that stretch reads MLTRLSKLSALMFLLGVSACKSPPPVQS. Residues 29 to 61 lie on the Periplasmic side of the membrane; it reads QRPEPAAWAMEKAQDLQQMLNSIITVSEVESTG.

The protein belongs to the caudovirales o-spanin family. As to quaternary structure, interacts (via C-terminus) with the spanin inner membrane subunit (via C-terminus). Part of the spanin complex which spans the entire periplasmic space. The spanin complex is composed of spanin inner membrane subunit and spanin outer membrane subunit.

The protein resides in the host cell outer membrane. Its function is as follows. Component of the spanin complex that disrupts the host outer membrane and participates in cell lysis during virus exit. The spanin complex conducts the final step in host lysis by disrupting the outer membrane after holin and endolysin action have permeabilized the inner membrane and degraded the host peptidoglycans. Host outer membrane disruption is possibly due to local fusion between the inner and outer membrane performed by the spanin complex. This Salmonella typhimurium (Bacteriophage P22) protein is Probable spanin, outer lipoprotein subunit (Rz1).